Reading from the N-terminus, the 123-residue chain is Small ribosomal subunit protein uS12 (123 aa).

Residue Asp89 is modified to 3-methylthioaspartic acid.

This sequence belongs to the universal ribosomal protein uS12 family. Part of the 30S ribosomal subunit. Contacts proteins S8 and S17. May interact with IF1 in the 30S initiation complex.

In terms of biological role, with S4 and S5 plays an important role in translational accuracy. Functionally, interacts with and stabilizes bases of the 16S rRNA that are involved in tRNA selection in the A site and with the mRNA backbone. Located at the interface of the 30S and 50S subunits, it traverses the body of the 30S subunit contacting proteins on the other side and probably holding the rRNA structure together. The combined cluster of proteins S8, S12 and S17 appears to hold together the shoulder and platform of the 30S subunit. This Geobacter metallireducens (strain ATCC 53774 / DSM 7210 / GS-15) protein is Small ribosomal subunit protein uS12.